Reading from the N-terminus, the 411-residue chain is Pyruvate dehydrogenase E1 component subunit alpha, mitochondrial (411 aa).

A mitochondrion-targeting transit peptide spans 1-29; it reads MFSRAVRLSRAALPIRVASQRVPIAARRS. Positions 111, 137, 138, 184, 186, 215, 216, 217, 244, and 246 each coordinate pyruvate. Thiamine diphosphate-binding residues include Tyr-137, Arg-138, Gly-184, Val-186, Asp-215, Gly-216, Ala-217, and Asn-244. Position 215 (Asp-215) interacts with Mg(2+). Mg(2+) is bound by residues Asn-244 and Tyr-246. His-311 provides a ligand contact to thiamine diphosphate.

As to quaternary structure, eukaryotic pyruvate dehydrogenase (PDH) complexes are organized as a core consisting of the oligomeric dihydrolipoamide acetyl-transferase (E2), around which are arranged multiple copies of pyruvate dehydrogenase (E1), dihydrolipoamide dehydrogenase (E3) and protein X (E3BP) bound by non-covalent bonds. The Chaetomium thermophilum PDH complex contains 60 E2 units, 12 E3BP units, about 20 E1 units, and 12 or more E3 units. The units are organized in 1 E2 60-mer, 4 E3BP trimers, about 20 E1 tetramers, and a maximum of 12 E3 dimers. Pyruvate dehydrogenase (E1) is active as a tetramer of 2 alpha and 2 beta subunits. The E3BP trimers are bound inside the icosahedral core with tetrahedral symmetry. Thiamine diphosphate is required as a cofactor. It depends on Mg(2+) as a cofactor.

Its subcellular location is the mitochondrion. It carries out the reaction N(6)-[(R)-lipoyl]-L-lysyl-[protein] + pyruvate + H(+) = N(6)-[(R)-S(8)-acetyldihydrolipoyl]-L-lysyl-[protein] + CO2. Functionally, the 10-megadalton pyruvate dehydrogenase complex contains multiple copies of three enzymatic components: pyruvate dehydrogenase (E1), dihydrolipoamide acetyltransferase (E2) and lipoamide dehydrogenase (E3) and catalyzes the overall oxidative decarboxylation of pyruvate to form acetyl-CoA and CO(2). Within the complex, pyruvate and thiamine pyrophosphate (TPP or vitamin B1) are bound by pyruvate dehydrogenase E1 subunits alpha and beta and pyruvate is decarboxylated leading to the 2-carbon hydrohyethyl bound to TPP. The E2 component contains covalently-bound lipoyl cofactors and transfers the hydroxyethyl group from TPP to an oxidized form of covalently bound lipoamide, and the resulting acetyl group is then transferred to free coenzyme A to form acetyl-CoA and reduced dihydrolipoamide-E2. Finally, the flavoprotein dihydrolipoamide dehydrogenase (E3) re-oxidizes the lipoyl group of dihydrolipoamide-E2 to form lipoamide-E2 and NADH. A fourth subunit, E3BP, is responsible for tethering E3 in proximity to the core, forming the entire metabolon. The polypeptide is Pyruvate dehydrogenase E1 component subunit alpha, mitochondrial (Chaetomium thermophilum (strain DSM 1495 / CBS 144.50 / IMI 039719) (Thermochaetoides thermophila)).